The chain runs to 301 residues: uncharacterized protein (301 aa).

9 consecutive transmembrane segments (helical) span residues 1 to 21, 33 to 53, 72 to 92, 101 to 121, 124 to 144, 185 to 205, 220 to 240, 246 to 266, and 270 to 290; these read MSWI…LGIV, SVLF…YFYY, AMSL…KIPG, FGII…TILI, FAWL…KTFY, YFTP…VFAI, IIYT…FCLA, FSYI…KIFI, and IAIP…FGII.

This sequence belongs to the TerC family.

It localises to the cell membrane. This is an uncharacterized protein from Rickettsia felis (strain ATCC VR-1525 / URRWXCal2) (Rickettsia azadi).